Here is a 677-residue protein sequence, read N- to C-terminus: Methionine--tRNA ligase (677 aa).

Residues proline 15–histidine 25 carry the 'HIGH' region motif. Zn(2+) contacts are provided by cysteine 146, cysteine 149, cysteine 159, and cysteine 162. Positions lysine 333–serine 337 match the 'KMSKS' region motif. Position 336 (lysine 336) interacts with ATP. The tRNA-binding domain occupies aspartate 575 to lysine 677.

The protein belongs to the class-I aminoacyl-tRNA synthetase family. MetG type 1 subfamily. As to quaternary structure, homodimer. Zn(2+) serves as cofactor.

The protein resides in the cytoplasm. It carries out the reaction tRNA(Met) + L-methionine + ATP = L-methionyl-tRNA(Met) + AMP + diphosphate. Functionally, is required not only for elongation of protein synthesis but also for the initiation of all mRNA translation through initiator tRNA(fMet) aminoacylation. The polypeptide is Methionine--tRNA ligase (Escherichia fergusonii (strain ATCC 35469 / DSM 13698 / CCUG 18766 / IAM 14443 / JCM 21226 / LMG 7866 / NBRC 102419 / NCTC 12128 / CDC 0568-73)).